A 402-amino-acid chain; its full sequence is MAVVKTTGKKDFDRSKEHINIGTIGHVDHGKTTLTAAISTVLAKKGLAEAKDYASIDAAPEEKARGITINTAHIEYSTDKRHYAHVDCPGHADYIKNMITGAAQMDGAILVVAATDGPMPQTREHILLSKQVGVPKMVVFLNKIDLLEGEEEMVDLVEVEIRELLSSYDFDGDNTPIIRGSARGALEGKPEWEAKVLELMDAVDSYIDSPVREMDKPFLMAVEDVFTITGRGTVATGKVERGQVKLNEEVEIVGYREEPKKTVITGIEMFNKNLQTAMAGDNAGVLLRGVDRKDIERGQVIAKPKTIIPHTKFKAAIYALKKEEGGRHTPFFKNYKPQFYFRTTDVTGGIEFEPGREMVIPGDNVDLTVELIAPIAVEQGTKFSIREGGRTVGAGTVTEIIK.

One can recognise a tr-type G domain in the interval 16–211; that stretch reads KEHINIGTIG…AVDSYIDSPV (196 aa). The interval 25–32 is G1; the sequence is GHVDHGKT. Residue 25-32 participates in GTP binding; it reads GHVDHGKT. T32 contributes to the Mg(2+) binding site. Positions 66-70 are G2; sequence GITIN. The tract at residues 87–90 is G3; sequence DCPG. Residues 87–91 and 142–145 each bind GTP; these read DCPGH and NKID. Residues 142–145 form a G4 region; sequence NKID. The segment at 181–183 is G5; sequence SAR.

The protein belongs to the TRAFAC class translation factor GTPase superfamily. Classic translation factor GTPase family. EF-Tu/EF-1A subfamily. As to quaternary structure, monomer.

The protein localises to the cytoplasm. It catalyses the reaction GTP + H2O = GDP + phosphate + H(+). In terms of biological role, GTP hydrolase that promotes the GTP-dependent binding of aminoacyl-tRNA to the A-site of ribosomes during protein biosynthesis. This chain is Elongation factor Tu, found in Mesomycoplasma hyopneumoniae (strain 232) (Mycoplasma hyopneumoniae).